The chain runs to 336 residues: Dihydroorotate dehydrogenase (quinone) (336 aa).

FMN contacts are provided by residues 62–66 (AGLDK) and T86. Residue K66 participates in substrate binding. 111–115 (NRMGF) is a binding site for substrate. FMN contacts are provided by N139 and N172. N172 is a substrate binding site. The Nucleophile role is filled by S175. N177 serves as a coordination point for substrate. FMN is bound by residues K217 and T245. Residue 246–247 (NT) coordinates substrate. Residues G268, G297, and 318–319 (YS) contribute to the FMN site.

Belongs to the dihydroorotate dehydrogenase family. Type 2 subfamily. In terms of assembly, monomer. The cofactor is FMN.

The protein resides in the cell membrane. It carries out the reaction (S)-dihydroorotate + a quinone = orotate + a quinol. The protein operates within pyrimidine metabolism; UMP biosynthesis via de novo pathway; orotate from (S)-dihydroorotate (quinone route): step 1/1. Its function is as follows. Catalyzes the conversion of dihydroorotate to orotate with quinone as electron acceptor. This Vibrio atlanticus (strain LGP32) (Vibrio splendidus (strain Mel32)) protein is Dihydroorotate dehydrogenase (quinone).